The following is a 158-amino-acid chain: Developmental pluripotency-associated protein 3 (158 aa).

2 disordered regions span residues M1–Q38 and S54–R78. Over residues D26–E35 the composition is skewed to acidic residues. Basic residues predominate over residues T58–L68.

It localises to the nucleus. It is found in the cytoplasm. Functionally, primordial germ cell (PGCs)-specific protein involved in epigenetic chromatin reprogramming in the zygote following fertilization. In zygotes, DNA demethylation occurs selectively in the paternal pronucleus before the first cell division, while the adjacent maternal pronucleus and certain paternally-imprinted loci are protected from this process. Participates in protection of DNA methylation in the maternal pronucleus by preventing conversion of 5mC to 5hmC: specifically recognizes and binds histone H3 dimethylated at 'Lys-9' (H3K9me2) on maternal genome, and protects maternal genome from TET3-mediated conversion to 5hmC and subsequent DNA demethylation. Does not bind paternal chromatin, which is mainly packed into protamine and does not contain much H3K9me2 mark. Also protects imprinted loci that are marked with H3K9me2 in mature sperm from DNA demethylation in early embryogenesis. May be important for the totipotent/pluripotent states continuing through preimplantation development. Also involved in chromatin condensation in oocytogenesis. The polypeptide is Developmental pluripotency-associated protein 3 (Dppa3) (Rattus norvegicus (Rat)).